The chain runs to 480 residues: MVRRIASATPMVQSPMSPLGTTYCVRPNSVSMNLQRRPLVIASTDEAKVTIIYAGLLIPGDGEPLRNAALVISDKIIAFVGSEADIPKKYLRSTQSTHRVPVLMPGLWDCHMHFGGDDDYYNDYTSGLATHPASSGARLARGCWEALQNGYTSYRDLAGYGCEVAKAINDGTIVGPNVYSSGAALSQTAGHGDIFALPAGEVLGSYGVMNPRPGYWGAGPLCIADGVEEVRRAVRLQIRRGAKVIKVMASGGVMSRDDNPNFAQFSPEELKVIVEEAARQNRIVSAHVHGKAGIMAAIKAGCKSLEHVSYADEEVWELMKEKGILYVATRSVIEIFLASNGEGLVKESWAKLQALADSHLKAYQGAIKAGVTIALGTDTAPGGPTALELQFAVERGGMTPLEAIKAATANAPLSVGPQAPLTGQLREGYEADVIALEENPLEDIKVFQEPKAVTHVWKGGKLFKGPGIGPWGEDARNPFL.

Residues histidine 111, histidine 113, lysine 246, histidine 287, and histidine 307 each contribute to the Zn(2+) site. Lysine 246 is an active-site residue. Aspartate 378 is an active-site residue.

Belongs to the metallo-dependent hydrolases superfamily. Ochratoxinase amidase 2 family. Homooctamer. Requires Zn(2+) as cofactor.

The protein resides in the secreted. It carries out the reaction ochratoxin A + H2O = ochratoxin alpha + L-phenylalanine. With respect to regulation, the Zn(2+)-specific chelator 1,10-phenanthroline inhibits the enzyme activity. Its function is as follows. Carboxypeptidase that catalyzes the release of a C-terminal amino acid with specific catalytic activity for aromatic amino acids such as phenylalanine. Is able to degrade ochratoxin A, one of the five major mycotoxins most harmful to humans and animals that is produced by Aspergillus and Penicillium species and occurs in a wide range of agricultural products. This chain is Ochratoxinase, found in Aspergillus niger (strain ATCC 1015 / CBS 113.46 / FGSC A1144 / LSHB Ac4 / NCTC 3858a / NRRL 328 / USDA 3528.7).